The following is a 692-amino-acid chain: Elongation factor G (692 aa).

Positions 8-282 (AKTRNIGIMA…AVIDYLPSPL (275 aa)) constitute a tr-type G domain. GTP-binding positions include 17–24 (AHVDAGKT), 81–85 (DTPGH), and 135–138 (NKMD).

It belongs to the TRAFAC class translation factor GTPase superfamily. Classic translation factor GTPase family. EF-G/EF-2 subfamily.

Its subcellular location is the cytoplasm. Functionally, catalyzes the GTP-dependent ribosomal translocation step during translation elongation. During this step, the ribosome changes from the pre-translocational (PRE) to the post-translocational (POST) state as the newly formed A-site-bound peptidyl-tRNA and P-site-bound deacylated tRNA move to the P and E sites, respectively. Catalyzes the coordinated movement of the two tRNA molecules, the mRNA and conformational changes in the ribosome. The chain is Elongation factor G from Streptococcus uberis (strain ATCC BAA-854 / 0140J).